A 69-amino-acid chain; its full sequence is uncharacterized protein (69 aa).

The signal sequence occupies residues 1-18 (MAMLWISMFIIMRKYGRS). The segment at 17-69 (RSSSSSSSSSSSSSSSSSSSSSSSSSSSSSSSSSSSSSSSSGSSSNSNRVVVV) is disordered. The span at 18 to 61 (SSSSSSSSSSSSSSSSSSSSSSSSSSSSSSSSSSSSSSSSGSSS) shows a compositional bias: low complexity.

It localises to the secreted. This is an uncharacterized protein from Dictyostelium discoideum (Social amoeba).